The primary structure comprises 549 residues: Probable protein kinase UbiB (549 aa).

The Protein kinase domain occupies 123 to 501 (DFDDIPLASA…QQKAHKSNYL (379 aa)). Residues 129–137 (LASASISQV) and Lys152 contribute to the ATP site. The active-site Proton acceptor is Asp287. 2 consecutive transmembrane segments (helical) span residues 498–518 (SNYLLITSAILVICGTILINQ) and 520–540 (ATLWPSYGSIGTGIALWVLGW).

It belongs to the ABC1 family. UbiB subfamily.

It is found in the cell inner membrane. It functions in the pathway cofactor biosynthesis; ubiquinone biosynthesis [regulation]. Is probably a protein kinase regulator of UbiI activity which is involved in aerobic coenzyme Q (ubiquinone) biosynthesis. This is Probable protein kinase UbiB from Shewanella halifaxensis (strain HAW-EB4).